A 406-amino-acid polypeptide reads, in one-letter code: Arginine biosynthesis bifunctional protein ArgJ (406 aa).

Substrate-binding residues include Thr-152, Lys-179, Thr-190, Glu-277, Asn-401, and Ser-406. The active-site Nucleophile is the Thr-190.

This sequence belongs to the ArgJ family. As to quaternary structure, heterotetramer of two alpha and two beta chains.

It localises to the cytoplasm. The enzyme catalyses N(2)-acetyl-L-ornithine + L-glutamate = N-acetyl-L-glutamate + L-ornithine. It catalyses the reaction L-glutamate + acetyl-CoA = N-acetyl-L-glutamate + CoA + H(+). The protein operates within amino-acid biosynthesis; L-arginine biosynthesis; L-ornithine and N-acetyl-L-glutamate from L-glutamate and N(2)-acetyl-L-ornithine (cyclic): step 1/1. Its pathway is amino-acid biosynthesis; L-arginine biosynthesis; N(2)-acetyl-L-ornithine from L-glutamate: step 1/4. Functionally, catalyzes two activities which are involved in the cyclic version of arginine biosynthesis: the synthesis of N-acetylglutamate from glutamate and acetyl-CoA as the acetyl donor, and of ornithine by transacetylation between N(2)-acetylornithine and glutamate. This chain is Arginine biosynthesis bifunctional protein ArgJ, found in Neisseria gonorrhoeae.